We begin with the raw amino-acid sequence, 166 residues long: Transcription antitermination protein NusB (166 aa).

Over residues 1-18 (MISDESDRFNPRDPKPAD) the composition is skewed to basic and acidic residues. The segment at 1 to 28 (MISDESDRFNPRDPKPADAGKPSKSAKR) is disordered.

Belongs to the NusB family.

Functionally, involved in transcription antitermination. Required for transcription of ribosomal RNA (rRNA) genes. Binds specifically to the boxA antiterminator sequence of the ribosomal RNA (rrn) operons. This is Transcription antitermination protein NusB from Pseudomonas putida (strain W619).